The chain runs to 197 residues: Peptidyl-tRNA hydrolase (197 aa).

Y18 is a binding site for tRNA. The active-site Proton acceptor is H23. Residues Y68, N70, and N116 each coordinate tRNA.

Belongs to the PTH family. As to quaternary structure, monomer.

The protein localises to the cytoplasm. It carries out the reaction an N-acyl-L-alpha-aminoacyl-tRNA + H2O = an N-acyl-L-amino acid + a tRNA + H(+). Hydrolyzes ribosome-free peptidyl-tRNAs (with 1 or more amino acids incorporated), which drop off the ribosome during protein synthesis, or as a result of ribosome stalling. Functionally, catalyzes the release of premature peptidyl moieties from peptidyl-tRNA molecules trapped in stalled 50S ribosomal subunits, and thus maintains levels of free tRNAs and 50S ribosomes. The sequence is that of Peptidyl-tRNA hydrolase from Desulfotalea psychrophila (strain LSv54 / DSM 12343).